A 41-amino-acid chain; its full sequence is Large ribosomal subunit protein bL36 (41 aa).

Belongs to the bacterial ribosomal protein bL36 family.

The sequence is that of Large ribosomal subunit protein bL36 from Jannaschia sp. (strain CCS1).